Consider the following 66-residue polypeptide: Beta-defensin 134 (66 aa).

The N-terminal stretch at 1–19 (MKPLLVVFVFLFLWDPVLA) is a signal peptide. Intrachain disulfides connect Cys-32–Cys-58, Cys-38–Cys-52, and Cys-42–Cys-59.

The protein belongs to the beta-defensin family.

The protein resides in the secreted. Its function is as follows. Has antibacterial activity. The polypeptide is Beta-defensin 134 (DEFB134) (Homo sapiens (Human)).